The primary structure comprises 983 residues: Isoleucine--tRNA ligase (983 aa).

The 'HIGH' region signature appears at 61–71; it reads PYANGELHVGH. Glutamate 608 provides a ligand contact to L-isoleucyl-5'-AMP. Residues 649-653 carry the 'KMSKS' region motif; the sequence is KMSKS. Lysine 652 is an ATP binding site. The Zn(2+) site is built by cysteine 952, cysteine 955, cysteine 972, and cysteine 975.

Belongs to the class-I aminoacyl-tRNA synthetase family. IleS type 1 subfamily. Monomer. It depends on Zn(2+) as a cofactor.

It localises to the cytoplasm. It carries out the reaction tRNA(Ile) + L-isoleucine + ATP = L-isoleucyl-tRNA(Ile) + AMP + diphosphate. Functionally, catalyzes the attachment of isoleucine to tRNA(Ile). As IleRS can inadvertently accommodate and process structurally similar amino acids such as valine, to avoid such errors it has two additional distinct tRNA(Ile)-dependent editing activities. One activity is designated as 'pretransfer' editing and involves the hydrolysis of activated Val-AMP. The other activity is designated 'posttransfer' editing and involves deacylation of mischarged Val-tRNA(Ile). This is Isoleucine--tRNA ligase from Gloeobacter violaceus (strain ATCC 29082 / PCC 7421).